Here is a 100-residue protein sequence, read N- to C-terminus: Large ribosomal subunit protein bL27 (100 aa).

The propeptide occupies 1–9 (MIIMNLQIF). A disordered region spans residues 13-32 (KGMGSSKNGRDSESKRLGTK).

It belongs to the bacterial ribosomal protein bL27 family. Post-translationally, the N-terminus is cleaved by ribosomal processing cysteine protease Prp.

The protein is Large ribosomal subunit protein bL27 of Clostridium kluyveri (strain ATCC 8527 / DSM 555 / NBRC 12016 / NCIMB 10680 / K1).